The sequence spans 255 residues: Acetylglutamate kinase (255 aa).

Residues 40-41, Arg-62, and Asn-153 each bind substrate; that span reads GG.

The protein belongs to the acetylglutamate kinase family. ArgB subfamily.

The protein localises to the cytoplasm. It carries out the reaction N-acetyl-L-glutamate + ATP = N-acetyl-L-glutamyl 5-phosphate + ADP. Its pathway is amino-acid biosynthesis; L-arginine biosynthesis; N(2)-acetyl-L-ornithine from L-glutamate: step 2/4. Its function is as follows. Catalyzes the ATP-dependent phosphorylation of N-acetyl-L-glutamate. In Bacillus cereus (strain ATCC 10987 / NRS 248), this protein is Acetylglutamate kinase.